Reading from the N-terminus, the 559-residue chain is MAASMQFYGVKTPELALNSKRIEFSSKGLNFSALVSSARVFSRNVDRSCKNIALRVTCEAGRVELLERKASETFKLNKTEKKLTCVMKFGGSSVASAERMIQVAKLILSFPDEKPVVVLSAMAKTTNKLLMAGEKAVCCGVTNVDTIEELSYIKELHIRTAHELGVETAVIAEHLEGLEQLLKGVAMMKELTLRSRDYLVSFGECMSTRLFAAYLNKIGHKARQYDAFEIGIITTDDFTNADILEATYPAVSKKLLGDWSKENALPVVTGFLGKGWRSCAVTTLGRGGSDLTATTIGKALGLREIQVWKDVDGVLTCDPNIYCGAQPVPHLTFDEAAELAYFGAQVLHPLSMRPAREGNIPVRVKNSYNPTAPGTVITRSRDMSKAVLTSIVLKRNVTMLDITSTRMLGQYGFLAKVFSTFEKLGISVDVVATSEVSISLTLDPSKFCSRELIQHELDQVVEELEKIAVVNLLRHRSIISLIGNVQRSSFILEKGFRVLRTNGINVQMISQGASKVNISLIVNDDEAEHCVKALHSAFFETDTCEAVSECPTGYIAASS.

The N-terminal 85 residues, 1–85 (MAASMQFYGV…LNKTEKKLTC (85 aa)), are a transit peptide targeting the chloroplast. ATP-binding residues include Lys-88, Gly-91, and Ser-120. Substrate is bound at residue Glu-204. 2 consecutive ACT domains span residues 402-480 (ITST…SIIS) and 481-559 (LIGN…AASS).

Belongs to the aspartokinase family. In terms of tissue distribution, highly expressed in xylem of leaves and hypocotyls, stele of roots and in trichomes after bolting. Weak expression in veins and mesophyll cells of caulone leaves, inflorescence stems, sepals, petals and stigmata.

It localises to the plastid. Its subcellular location is the chloroplast. The catalysed reaction is L-aspartate + ATP = 4-phospho-L-aspartate + ADP. The protein operates within amino-acid biosynthesis; L-lysine biosynthesis via DAP pathway; (S)-tetrahydrodipicolinate from L-aspartate: step 1/4. Its pathway is amino-acid biosynthesis; L-methionine biosynthesis via de novo pathway; L-homoserine from L-aspartate: step 1/3. It participates in amino-acid biosynthesis; L-threonine biosynthesis; L-threonine from L-aspartate: step 1/5. Its activity is regulated as follows. Allosterically inhibited by lysine, but not by S-adenosyl-L-methionine (SAM). K(0.5) for lysine in the presence of physiological concentrations of substrates is 7.4 uM. No inhibition by threonine or leucine and no activation or inhibition by alanine, cysteine, isoleucine, serine, valine, methionine, glutamine, asparagine, glutamic acid or arginine. Functionally, involved in the first step of essential amino acids lysine, threonine, methionine and isoleucine synthesis via the aspartate-family pathway. The polypeptide is Aspartokinase 3, chloroplastic (AK3) (Arabidopsis thaliana (Mouse-ear cress)).